Consider the following 323-residue polypeptide: Beta-ketoacyl-[acyl-carrier-protein] synthase III (323 aa).

Catalysis depends on residues Cys113 and His250. Residues 251-255 (QANKR) form an ACP-binding region. Asn280 is a catalytic residue.

Belongs to the thiolase-like superfamily. FabH family. In terms of assembly, homodimer.

The protein localises to the cytoplasm. It carries out the reaction malonyl-[ACP] + acetyl-CoA + H(+) = 3-oxobutanoyl-[ACP] + CO2 + CoA. It participates in lipid metabolism; fatty acid biosynthesis. Catalyzes the condensation reaction of fatty acid synthesis by the addition to an acyl acceptor of two carbons from malonyl-ACP. Catalyzes the first condensation reaction which initiates fatty acid synthesis and may therefore play a role in governing the total rate of fatty acid production. Possesses both acetoacetyl-ACP synthase and acetyl transacylase activities. Its substrate specificity determines the biosynthesis of branched-chain and/or straight-chain of fatty acids. The sequence is that of Beta-ketoacyl-[acyl-carrier-protein] synthase III from Brucella melitensis biotype 2 (strain ATCC 23457).